A 168-amino-acid polypeptide reads, in one-letter code: ATP synthase subunit b (168 aa).

The helical transmembrane segment at 9–29 threads the bilayer; that stretch reads AIPFGTIAYTLFIFLILLVML.

It belongs to the ATPase B chain family. In terms of assembly, F-type ATPases have 2 components, F(1) - the catalytic core - and F(0) - the membrane proton channel. F(1) has five subunits: alpha(3), beta(3), gamma(1), delta(1), epsilon(1). F(0) has three main subunits: a(1), b(2) and c(10-14). The alpha and beta chains form an alternating ring which encloses part of the gamma chain. F(1) is attached to F(0) by a central stalk formed by the gamma and epsilon chains, while a peripheral stalk is formed by the delta and b chains.

It is found in the cell membrane. In terms of biological role, f(1)F(0) ATP synthase produces ATP from ADP in the presence of a proton or sodium gradient. F-type ATPases consist of two structural domains, F(1) containing the extramembraneous catalytic core and F(0) containing the membrane proton channel, linked together by a central stalk and a peripheral stalk. During catalysis, ATP synthesis in the catalytic domain of F(1) is coupled via a rotary mechanism of the central stalk subunits to proton translocation. Its function is as follows. Component of the F(0) channel, it forms part of the peripheral stalk, linking F(1) to F(0). The protein is ATP synthase subunit b of Bacillus cereus (strain G9842).